The chain runs to 108 residues: Small ribosomal subunit protein eS25y (108 aa).

Residues 1-36 are disordered; the sequence is MAPKKDKVPPPSSKPAKSGGGKQKKKKWSKGKQKEK. The segment covering 22–31 has biased composition (basic residues); sequence KQKKKKWSKG.

Belongs to the eukaryotic ribosomal protein eS25 family.

This Arabidopsis thaliana (Mouse-ear cress) protein is Small ribosomal subunit protein eS25y (RPS25B).